Here is a 261-residue protein sequence, read N- to C-terminus: Ribonuclease HII (261 aa).

Residues 71–259 enclose the RNase H type-2 domain; that stretch reads KYIAGVDEVG…VKESKLHFDS (189 aa). A divalent metal cation is bound by residues aspartate 77, glutamate 78, and aspartate 169.

Belongs to the RNase HII family. The cofactor is Mn(2+). Requires Mg(2+) as cofactor.

Its subcellular location is the cytoplasm. The catalysed reaction is Endonucleolytic cleavage to 5'-phosphomonoester.. Functionally, endonuclease that specifically degrades the RNA of RNA-DNA hybrids. The polypeptide is Ribonuclease HII (Listeria monocytogenes serovar 1/2a (strain ATCC BAA-679 / EGD-e)).